The sequence spans 801 residues: Glycerol-3-phosphate acyltransferase 2, mitochondrial (801 aa).

Positions 1–24 (METMLKSNPQMQQRNNHSGQETSL) are disordered. At 1-305 (METMLKSNPQ…PGPRLSALGQ (305 aa)) the chain is on the cytoplasmic side. The acyltransferase stretch occupies residues 180–290 (QLHKGQMKMV…SGQPLLIFLE (111 aa)). The short motif at 205–210 (HKSLLD) is the HXXXXD motif element. A helical transmembrane segment spans residues 306–332 (AWLGLVVQAVQAGIVPDATLVPVATAY). At 333-449 (DLVPDAPCNM…QLLVRRLSRH (117 aa)) the chain is on the mitochondrial intermembrane side. The helical transmembrane segment at 450-472 (VLSASVASSAVMSTAIMATLLLL) threads the bilayer. The Cytoplasmic segment spans residues 473–795 (KHQKGVVLSQ…DNQDKLEQFI (323 aa)).

Belongs to the GPAT/DAPAT family. Interacts with PIWIL2. As to expression, expressed in spermatocytes and spermatides.

Its subcellular location is the mitochondrion outer membrane. It carries out the reaction sn-glycerol 3-phosphate + an acyl-CoA = a 1-acyl-sn-glycero-3-phosphate + CoA. The enzyme catalyses a 1-acyl-sn-glycero-3-phosphate + an acyl-CoA = a 1,2-diacyl-sn-glycero-3-phosphate + CoA. It catalyses the reaction 1-(9Z-octadecenoyl)-sn-glycero-3-phosphate + (9Z)-octadecenoyl-CoA = 1,2-di-(9Z-octadecenoyl)-sn-glycero-3-phosphate + CoA. The catalysed reaction is 1-(9Z-octadecenoyl)-sn-glycero-3-phosphate + (5Z,8Z,11Z,14Z)-eicosatetraenoyl-CoA = 1-(9Z)-octadecenoyl-2-(5Z,8Z,11Z,14Z)-eicosatetraenoyl-sn-glycero-3-phosphate + CoA. It carries out the reaction (5Z,8Z,11Z,14Z)-eicosatetraenoyl-CoA + sn-glycerol 3-phosphate = 1-(5Z,8Z,11Z,14Z-eicosatetraenoyl)-sn-glycero-3-phosphate + CoA. It participates in phospholipid metabolism; CDP-diacylglycerol biosynthesis; CDP-diacylglycerol from sn-glycerol 3-phosphate: step 1/3. With respect to regulation, inhibited by N-ethylmaleimide (NEM). Transfers an acyl-group from acyl-ACP to the sn-1 position of glycerol-3-phosphate producing a lysophosphatidic acid (LPA), an essential step for the triacylglycerol (TAG) and glycerophospholipids. In vitro also transfers an acyl-group from acyl-ACP to the LPA producing a phosphatidic acid (PA). Prefers arachidonoyl-CoA as the acyl donor. Required for primary processing step during piRNA biosynthesis. Molecular mechanisms by which it promotes piRNA biosynthesis are unclear and do not involve its acyltransferase activity. The protein is Glycerol-3-phosphate acyltransferase 2, mitochondrial of Rattus norvegicus (Rat).